The primary structure comprises 617 residues: Chaperone protein HscA homolog (617 aa).

It belongs to the heat shock protein 70 family.

Functionally, chaperone involved in the maturation of iron-sulfur cluster-containing proteins. Has a low intrinsic ATPase activity which is markedly stimulated by HscB. The polypeptide is Chaperone protein HscA homolog (Vibrio campbellii (strain ATCC BAA-1116)).